A 465-amino-acid chain; its full sequence is Cysteine--tRNA ligase (465 aa).

Cysteine 27 contributes to the Zn(2+) binding site. The 'HIGH' region signature appears at 29–39 (PTVYNYIHIGN). Residues cysteine 207, histidine 232, and glutamate 236 each contribute to the Zn(2+) site. The 'KMSKS' region signature appears at 264–268 (KMSKS). Lysine 267 is an ATP binding site.

This sequence belongs to the class-I aminoacyl-tRNA synthetase family. In terms of assembly, monomer. The cofactor is Zn(2+).

Its subcellular location is the cytoplasm. The enzyme catalyses tRNA(Cys) + L-cysteine + ATP = L-cysteinyl-tRNA(Cys) + AMP + diphosphate. The polypeptide is Cysteine--tRNA ligase (Clostridioides difficile (strain 630) (Peptoclostridium difficile)).